The sequence spans 173 residues: MEWSLPVDLQEEILSRVPAKSLARWKSTPKQWKGPISIEFLHLLRSTLKFPLLNLHLKSKSIYVTSFTAMVFCYAPPSTKDSRFGIHVQGKPSGLNLDTGTVSPTFRLSNKVVVCCKWRSDSINTIYFVGENKHVQVDQRRGDLTLGQSCSFLMNYVPSFVQIQQGTLLAPRT.

Positions 1–46 (MEWSLPVDLQEEILSRVPAKSLARWKSTPKQWKGPISIEFLHLLRS) constitute an F-box domain.

This Arabidopsis thaliana (Mouse-ear cress) protein is Probable F-box protein At1g27490.